A 58-amino-acid polypeptide reads, in one-letter code: Large ribosomal subunit protein bL32 (58 aa).

This sequence belongs to the bacterial ribosomal protein bL32 family.

The protein is Large ribosomal subunit protein bL32 of Carboxydothermus hydrogenoformans (strain ATCC BAA-161 / DSM 6008 / Z-2901).